Reading from the N-terminus, the 274-residue chain is 2,3,4,5-tetrahydropyridine-2,6-dicarboxylate N-succinyltransferase (274 aa).

Residues R104 and D141 each contribute to the substrate site.

It belongs to the transferase hexapeptide repeat family. In terms of assembly, homotrimer.

It is found in the cytoplasm. The catalysed reaction is (S)-2,3,4,5-tetrahydrodipicolinate + succinyl-CoA + H2O = (S)-2-succinylamino-6-oxoheptanedioate + CoA. It participates in amino-acid biosynthesis; L-lysine biosynthesis via DAP pathway; LL-2,6-diaminopimelate from (S)-tetrahydrodipicolinate (succinylase route): step 1/3. In Shewanella denitrificans (strain OS217 / ATCC BAA-1090 / DSM 15013), this protein is 2,3,4,5-tetrahydropyridine-2,6-dicarboxylate N-succinyltransferase.